We begin with the raw amino-acid sequence, 495 residues long: BUB3-interacting and GLEBS motif-containing protein ZNF207 (495 aa).

Positions 1 to 92 are microtubule-binding region; sequence MGRKKKKQLK…EGIPEKDMDE (92 aa). C2H2-type zinc fingers lie at residues 11–34 and 35–58; these read PWCW…KAKH and FKCH…MQVH. A compositionally biased stretch (basic and acidic residues) spans 99 to 111; the sequence is QKTQESQKKKQQD. 3 disordered regions span residues 99 to 161, 252 to 292, and 316 to 372; these read QKTQ…PGIP, PPAP…SNSE, and VGTD…ATLT. Residues 112–121 are compositionally biased toward acidic residues; that stretch reads DSDEYDDDES. The span at 127–136 shows a compositional bias: polar residues; that stretch reads FQPQPVQPQQ. Pro residues predominate over residues 142–161; the sequence is MAQPGLPPVPGAPGMPPGIP. Composition is skewed to low complexity over residues 283 to 292 and 326 to 372; these read SSSTASSNSE and TPAA…ATLT. The segment at 376 to 408 is GLEBS; it reads ATSKLIHPDEDISLEERRAQLPKYQRNLPRPGQ. The disordered stretch occupies residues 462 to 495; it reads PYGQGPPMVPPYQGGPPRPPMGMRPPVMSQGGRY. Residues 464-484 are compositionally biased toward pro residues; it reads GQGPPMVPPYQGGPPRPPMGM.

In terms of assembly, interacts (via GLEBS region) with BUB3. In terms of tissue distribution, in day-13 embryo, strongly expressed in the nervous system (brain, spinal cord and dorsal root ganglia), with strong to weak expression in other regions. Continues to be strongly expressed in the neonatal brain while expression is weak in the brain and spinal cord of adult.

The protein resides in the nucleus. The protein localises to the chromosome. It is found in the centromere. Its subcellular location is the kinetochore. It localises to the cytoplasm. The protein resides in the cytoskeleton. The protein localises to the spindle. Its function is as follows. Kinetochore- and microtubule-binding protein that plays a key role in spindle assembly. ZNF207/BuGZ is mainly composed of disordered low-complexity regions and undergoes phase transition or coacervation to form temperature-dependent liquid droplets. Coacervation promotes microtubule bundling and concentrates tubulin, promoting microtubule polymerization and assembly of spindle and spindle matrix by concentrating its building blocks. Also acts as a regulator of mitotic chromosome alignment by mediating the stability and kinetochore loading of BUB3. Mechanisms by which BUB3 is protected are unclear: according to a first report, ZNF207/BuGZ may act by blocking ubiquitination and proteasomal degradation of BUB3. According to another report, the stabilization is independent of the proteasome. This chain is BUB3-interacting and GLEBS motif-containing protein ZNF207, found in Mus musculus (Mouse).